A 145-amino-acid chain; its full sequence is Endoribonuclease YbeY (145 aa).

Residues His-109, His-113, and His-119 each coordinate Zn(2+).

Belongs to the endoribonuclease YbeY family. Requires Zn(2+) as cofactor.

It is found in the cytoplasm. Functionally, single strand-specific metallo-endoribonuclease involved in late-stage 70S ribosome quality control and in maturation of the 3' terminus of the 16S rRNA. This is Endoribonuclease YbeY from Vesicomyosocius okutanii subsp. Calyptogena okutanii (strain HA).